A 338-amino-acid polypeptide reads, in one-letter code: Eukaryotic translation initiation factor 3 subunit H (338 aa).

The MPN domain occupies 22–154 (VQCDGLAVMK…LKAYRLTPQA (133 aa)).

This sequence belongs to the eIF-3 subunit H family. In terms of assembly, component of the eukaryotic translation initiation factor 3 (eIF-3) complex. The eIF-3 complex interacts with pix. Interacts with mxt.

Its subcellular location is the cytoplasm. Its function is as follows. Component of the eukaryotic translation initiation factor 3 (eIF-3) complex, which is involved in protein synthesis of a specialized repertoire of mRNAs and, together with other initiation factors, stimulates binding of mRNA and methionyl-tRNAi to the 40S ribosome. The eIF-3 complex specifically targets and initiates translation of a subset of mRNAs involved in cell proliferation. This chain is Eukaryotic translation initiation factor 3 subunit H, found in Drosophila yakuba (Fruit fly).